Reading from the N-terminus, the 338-residue chain is P2Y purinoceptor 14 (338 aa).

Topologically, residues 1–29 (MINSTSTQPPDESCSQNLLITQQIIPVLY) are extracellular. N-linked (GlcNAc...) asparagine glycosylation occurs at Asn-3. A helical membrane pass occupies residues 30–50 (CMVFIAGILLNGVSGWIFFYV). Over 51-55 (PSSKS) the chain is Cytoplasmic. The chain crosses the membrane as a helical span at residues 56 to 76 (FIIYLKNIVIADFVMSLTFPF). Residues 77-96 (KILGDSGLGPWQLNVFVCRV) are Extracellular-facing. Cys-94 and Cys-172 are disulfide-bonded. The helical transmembrane segment at 97-117 (SAVLFYVNMYVSIVFFGLISF) threads the bilayer. The Cytoplasmic segment spans residues 118–139 (DRYYKIVKPLWTSFIQSVSYSK). A helical transmembrane segment spans residues 140-160 (LLSVIVWMLMLLLAVPNIILT). Asn-161 is a glycosylation site (N-linked (GlcNAc...) asparagine). Topologically, residues 161–188 (NQSVREVTQIKCIELKSELGRKWHKASN) are extracellular. Residues 189–209 (YIFVAIFWIVFLLLIVFYTAI) traverse the membrane as a helical segment. Topologically, residues 210–234 (TKKIFKSHLKSSRNSTSVKKKSSRN) are cytoplasmic. A helical membrane pass occupies residues 235-255 (IFSIVFVFFVCFVPYHIARIP). Topologically, residues 256–278 (YTKSQTEAHYSCQSKEILRYMKE) are extracellular. Residues 279–299 (FTLLLSAANVCLDPIIYFFLC) traverse the membrane as a helical segment. The Cytoplasmic segment spans residues 300–338 (QPFREILCKKLHIPLKAQNDLDISRIKRGNTTLESTDTL).

Belongs to the G-protein coupled receptor 1 family. In terms of tissue distribution, highest expression in the placenta, adipose tissue, stomach and intestine, intermediate levels in the brain, spleen, lung and heart, lowest levels in the kidney.

It is found in the cell membrane. In terms of biological role, receptor for UDP-glucose and other UDP-sugar coupled to G-proteins. Not activated by ATP, ADP, UTP or ATP. The sequence is that of P2Y purinoceptor 14 (P2RY14) from Homo sapiens (Human).